A 503-amino-acid chain; its full sequence is Cytochrome P450 3A13 (503 aa).

A heme-binding site is contributed by cysteine 442.

The protein belongs to the cytochrome P450 family. Heme serves as cofactor.

It is found in the endoplasmic reticulum membrane. It localises to the microsome membrane. The catalysed reaction is an organic molecule + reduced [NADPH--hemoprotein reductase] + O2 = an alcohol + oxidized [NADPH--hemoprotein reductase] + H2O + H(+). In terms of biological role, can activate aflatoxin B1 to a genotoxic product. The sequence is that of Cytochrome P450 3A13 (Cyp3a13) from Mus musculus (Mouse).